The sequence spans 375 residues: Alcohol dehydrogenase 1 (375 aa).

Ser-2 carries the N-acetylserine modification. Cys-47, His-68, Cys-98, Cys-101, Cys-104, Cys-112, and Cys-175 together coordinate Zn(2+). Residues 200–205, Asp-224, and Lys-229 each bind NAD(+); that span reads GLGGVG. An N6-succinyllysine modification is found at Lys-234. Residue 293 to 295 participates in NAD(+) binding; the sequence is VGV. An N6-succinyllysine modification is found at Lys-340. Arg-370 is a binding site for NAD(+).

The protein belongs to the zinc-containing alcohol dehydrogenase family. As to quaternary structure, homodimer. Zn(2+) serves as cofactor.

Its subcellular location is the cytoplasm. The catalysed reaction is a primary alcohol + NAD(+) = an aldehyde + NADH + H(+). It catalyses the reaction a secondary alcohol + NAD(+) = a ketone + NADH + H(+). The sequence is that of Alcohol dehydrogenase 1 (ADH1) from Oryctolagus cuniculus (Rabbit).